A 283-amino-acid polypeptide reads, in one-letter code: Pantoate--beta-alanine ligase (283 aa).

This sequence belongs to the pantothenate synthetase family.

It catalyses the reaction (R)-pantoate + beta-alanine + ATP = (R)-pantothenate + AMP + diphosphate + H(+). It functions in the pathway cofactor biosynthesis; (R)-pantothenate biosynthesis; (R)-pantothenate from (R)-pantoate and beta-alanine: step 1/1. The sequence is that of Pantoate--beta-alanine ligase (pan6) from Schizosaccharomyces pombe (strain 972 / ATCC 24843) (Fission yeast).